Here is a 573-residue protein sequence, read N- to C-terminus: DNA polymerase lambda (573 aa).

Residues 35–131 (EARGWLSSLR…RLTDTEGFSL (97 aa)) enclose the BRCT domain. Disordered stretches follow at residues 126-204 (TEGF…GPQV) and 214-233 (TGHY…APEA). The segment at 263-277 (KAYSVQGDKWRALGY) is DNA-binding. The active-site Schiff-base intermediate with DNA is the lysine 310. Positions 343 to 346 (GTKT) are DNA-binding. DCTP is bound by residues arginine 384, 415-418 (SYRR), and 424-427 (GDVD). Residues 418–427 (RGKMTCGDVD) are involved in primer binding. Residues aspartate 425, aspartate 427, and aspartate 488 each coordinate Mn(2+). The DNA-binding stretch occupies residues 464–503 (ENGQQQKYLGVCRLPGPGKRHRRLDIIVVPYCEFACALLY). Asparagine 511 serves as a coordination point for dCTP.

It belongs to the DNA polymerase type-X family. As to quaternary structure, interacts with PCNA. Interacts with PAXX; promoting POLL recruitment to double-strand breaks (DSBs) and stimulation of the end-filling activity of POLL. Interacts with XRCC4; promoting POLL recruitment to double-strand breaks (DSBs) and stimulation of the end-filling activity of POLL. Interacts with NHEJ1/XLF; promoting POLL recruitment to double-strand breaks (DSBs) and stimulation of the end-filling activity of POLL. Mn(2+) is required as a cofactor.

It is found in the nucleus. The catalysed reaction is DNA(n) + a 2'-deoxyribonucleoside 5'-triphosphate = DNA(n+1) + diphosphate. DNA polymerase that functions in several pathways of DNA repair. Involved in base excision repair (BER) responsible for repair of lesions that give rise to abasic (AP) sites in DNA. Also contributes to DNA double-strand break repair by non-homologous end joining and homologous recombination. Has both template-dependent and template-independent (terminal transferase) DNA polymerase activities. Also has a 5'-deoxyribose-5-phosphate lyase (dRP lyase) activity. The chain is DNA polymerase lambda from Mus musculus (Mouse).